Here is a 146-residue protein sequence, read N- to C-terminus: Snaclec 5 (146 aa).

The signal sequence occupies residues Met-1–Ala-23. 3 cysteine pairs are disulfide-bonded: Cys-25–Cys-36, Cys-53–Cys-142, and Cys-119–Cys-134. A C-type lectin domain is found at Tyr-32 to Lys-143.

This sequence belongs to the snaclec family. As to quaternary structure, heterodimer; disulfide-linked. In terms of tissue distribution, expressed by the venom gland.

The protein localises to the secreted. Functionally, interferes with one step of hemostasis (modulation of platelet aggregation, or coagulation cascade, for example). This is Snaclec 5 from Echis pyramidum leakeyi (Leakey's carpet viper).